The chain runs to 801 residues: Protein 4.1 (801 aa).

Residues 1 to 187 are disordered; the sequence is MTTEKGLLAE…GESKASHKVV (187 aa). The segment covering 45–58 has biased composition (low complexity); that stretch reads EQSQESPSTTSPST. Over residues 88-107 the composition is skewed to basic and acidic residues; the sequence is SDEKEVELLGEKGQDQKDVD. Positions 108-117 are enriched in acidic residues; that stretch reads EGLGEQLEDD. Positions 141–151 are enriched in polar residues; it reads SLSSAETQPAQ. The segment covering 154–166 has biased composition (acidic residues); sequence QKEDQDPEADCED. Residues 167–182 are compositionally biased toward basic and acidic residues; that stretch reads VEGKEPIKKPEGESKA. The region spanning 193–474 is the FERM domain; that stretch reads MRCKVTLLDD…EHHTFFRLTS (282 aa). The segment at 477 to 587 is hydrophilic; sequence SIPKHRFLSL…GMPNQRESPK (111 aa). Positions 516–613 are disordered; that stretch reads RTGSKRASRS…DKVKDLEKTQ (98 aa). Positions 563–577 are enriched in basic and acidic residues; it reads RVEEMPKKTEEKPKE. The spectrin--actin-binding stretch occupies residues 588–651; sequence DVKATQQDSP…WDKRLSTHSP (64 aa). Over residues 591-601 the composition is skewed to polar residues; it reads ATQQDSPSPTV. Over residues 604–613 the composition is skewed to basic and acidic residues; the sequence is DKVKDLEKTQ. The segment at 653 to 801 is C-terminal (CTD); sequence RTLSFNGQVQ…GVVHQETEIA (149 aa).

Binds with a high affinity to glycophorin and with lower affinity to band III protein. Associates with the nuclear mitotic apparatus. Binds calmodulin. Post-translationally, phosphorylated at multiple sites by different protein kinases and each phosphorylation event selectively modulates the protein's functions. Found exclusively in photoreceptors following the terminal mitosis of retinal neurons. When retinal synaptogenesis is complete, protein 4.1 is also expressed in the inner retina. In adult amphibian retinas, protein 4.1 is detected in photoreceptors, bipolar cells, and ganglion cell axons.

The protein resides in the nucleus. Its subcellular location is the cytoplasm. It is found in the cytoskeleton. It localises to the cell cortex. Functionally, protein 4.1 is a major structural element of the erythrocyte membrane skeleton. It plays a key role in regulating membrane physical properties of mechanical stability and deformability by stabilizing spectrin-actin interaction. May be required for dynein-dynactin complex and NUMA1 recruitment at the mitotic cell cortex during anaphase. The chain is Protein 4.1 from Xenopus laevis (African clawed frog).